The chain runs to 222 residues: Probable transaldolase (222 aa).

Residue Lys-91 is the Schiff-base intermediate with substrate of the active site.

Belongs to the transaldolase family. Type 3B subfamily.

It is found in the cytoplasm. It carries out the reaction D-sedoheptulose 7-phosphate + D-glyceraldehyde 3-phosphate = D-erythrose 4-phosphate + beta-D-fructose 6-phosphate. The protein operates within carbohydrate degradation; pentose phosphate pathway; D-glyceraldehyde 3-phosphate and beta-D-fructose 6-phosphate from D-ribose 5-phosphate and D-xylulose 5-phosphate (non-oxidative stage): step 2/3. Transaldolase is important for the balance of metabolites in the pentose-phosphate pathway. The chain is Probable transaldolase from Chlorobaculum parvum (strain DSM 263 / NCIMB 8327) (Chlorobium vibrioforme subsp. thiosulfatophilum).